The primary structure comprises 167 residues: Large ribosomal subunit protein uL15 (167 aa).

The span at M1 to P10 shows a compositional bias: polar residues. The disordered stretch occupies residues M1–G37. Residues R21 to V35 are compositionally biased toward gly residues.

The protein belongs to the universal ribosomal protein uL15 family. In terms of assembly, part of the 50S ribosomal subunit.

In terms of biological role, binds to the 23S rRNA. This is Large ribosomal subunit protein uL15 from Methylobacterium radiotolerans (strain ATCC 27329 / DSM 1819 / JCM 2831 / NBRC 15690 / NCIMB 10815 / 0-1).